The sequence spans 539 residues: Glutathione synthetase, chloroplastic (539 aa).

The N-terminal 61 residues, 1 to 61 (MGSGCSSLSY…SPLRCGRSFK (61 aa)), are a transit peptide targeting the chloroplast. Substrate is bound at residue Arg-193. Glu-209 contributes to the ATP binding site. Mg(2+) contacts are provided by Glu-209 and Asn-211. Substrate contacts are provided by residues 213 to 216 (ISCS), 281 to 283 (ERN), Gln-287, and 335 to 338 (RSGY). ATP-binding positions include Lys-374, 428 to 437 (KPQREGGGNN), Tyr-439, 464 to 467 (MQRI), and Glu-490. Glu-432 serves as a coordination point for Mg(2+). Position 515 (Arg-515) interacts with substrate. Residues Lys-517 and Glu-523 each contribute to the ATP site. 526–527 (VA) is a substrate binding site.

Belongs to the eukaryotic GSH synthase family. In terms of assembly, homodimer. The cofactor is Mg(2+).

Its subcellular location is the plastid. The protein localises to the chloroplast. It catalyses the reaction gamma-L-glutamyl-L-cysteine + glycine + ATP = glutathione + ADP + phosphate + H(+). It functions in the pathway sulfur metabolism; glutathione biosynthesis; glutathione from L-cysteine and L-glutamate: step 2/2. This chain is Glutathione synthetase, chloroplastic (GSH2), found in Arabidopsis thaliana (Mouse-ear cress).